The following is a 468-amino-acid chain: UDP-N-acetylmuramate--L-alanine ligase (468 aa).

114–120 provides a ligand contact to ATP; it reads GTHGKTT.

It belongs to the MurCDEF family.

It is found in the cytoplasm. The enzyme catalyses UDP-N-acetyl-alpha-D-muramate + L-alanine + ATP = UDP-N-acetyl-alpha-D-muramoyl-L-alanine + ADP + phosphate + H(+). It participates in cell wall biogenesis; peptidoglycan biosynthesis. Functionally, cell wall formation. In Methylorubrum extorquens (strain PA1) (Methylobacterium extorquens), this protein is UDP-N-acetylmuramate--L-alanine ligase.